The chain runs to 406 residues: CinA-like protein (406 aa).

The protein belongs to the CinA family.

The polypeptide is CinA-like protein (Thermomicrobium roseum (strain ATCC 27502 / DSM 5159 / P-2)).